The chain runs to 352 residues: RNA-binding protein lark (352 aa).

RRM domains lie at 7-77 and 86-156; these read FKLF…AAKS and TKIF…VSTS. The CCHC-type zinc-finger motif lies at 168 to 185; it reads EQCYRCGRSGHWSKECPR. 2 disordered regions span residues 187–228 and 254–352; these read YGSA…LRDR and YQTS…YAPY. Ser198 and Ser201 each carry phosphoserine. Composition is skewed to pro residues over residues 214–224 and 262–277; these read PYPPPPPPPPF and FPPPPISRREPMPLPP. Positions 279-288 are enriched in polar residues; that stretch reads LSGSLRSCSV. Residues Ser315 and Ser325 each carry the phosphoserine modification. Residues 320–334 show a composition bias toward basic and acidic residues; that stretch reads GYEDFSRDAFDERMI.

Expressed in the CNS and in CCAP neurons of the ventral nervous system (VNS), which control insect ecdysis.

The protein resides in the cytoplasm. Its subcellular location is the nucleus. Essential RNA-binding protein. May be required for circadian repression of eclosion. Also essential for nurse cell dumping during oogenesis, the process whereby the cytoplasmic contents of nurse cells are transferred to the oocyte late in it's development. This is RNA-binding protein lark (lark) from Drosophila melanogaster (Fruit fly).